The following is an 84-amino-acid chain: Gas vesicle protein M1 (84 aa).

An interacts with GvpL1 region spans residues 1–25; it reads MEPTKDETHAIVEFVDVLLRDGAVI. The interval 5 to 21 is alpha helix 1; the sequence is KDETHAIVEFVDVLLRD. Beta-strand regions lie at residues 27 to 29 and 41 to 43; these read ADV and ISL. Positions 44-48 match the Conserved in GvpJ1/2 but not GvpA motif; the sequence is RAAIA. Alpha helix regions lie at residues 46-56 and 62-84; these read AIAGMTTMTEY and WDAA…RRED.

Belongs to the gas vesicle GvpA family. As to quaternary structure, gvpF to GvpM interact with each other in vitro, and may form multi-subunit complex(es). Might interact with GvpA1.

The protein resides in the gas vesicle. Its function is as follows. Proteins GvpF to GvpM might be involved in nucleating gas vesicle formation. A minor component of the gas vesicle. Gas vesicles are hollow, gas filled proteinaceous nanostructures found in several microbial planktonic microorganisms. They allow positioning of halobacteria at the optimal depth for growth in the poorly aerated, shallow brine pools of their habitat. Functionally, expression of a 9.5 kb p-vac DNA fragment containing 2 divergently transcribed regions (gvpD-gvpE-gvpF-gvpG-gvpH-gvpI-gvpJ-gvpK-gvpL-gvpM and gvpA-gvpC-gvpN-gvpO) allows H.volcanii to produce gas vesicles. All site-directed mutagenesis is tested in H.volcanii. A minimal gas vesicle can be made in H.volcanii by gvpA1-gvpO1 plus gvpF1-gvpG1-gvpJ1-gvpK1-gvpL1-gvpM1; lack of enough GvpJ1 prevents formation. A similar region restores gas vesicle production in H.halobium without the p-vac locus, but it still has the c-vac locus. This Halobacterium salinarum (strain ATCC 700922 / JCM 11081 / NRC-1) (Halobacterium halobium) protein is Gas vesicle protein M1 (gvpM11).